We begin with the raw amino-acid sequence, 330 residues long: Cathepsin K (330 aa).

Residues Met-1–Ala-16 form the signal peptide. The propeptide at Leu-17 to Arg-115 is activation peptide. Residue Asn-104 is glycosylated (N-linked (GlcNAc...) asparagine). Intrachain disulfides connect Cys-137–Cys-178, Cys-171–Cys-211, and Cys-270–Cys-319. Cys-140 is a catalytic residue. Catalysis depends on residues His-277 and Asn-297.

The protein belongs to the peptidase C1 family.

The protein resides in the lysosome. It is found in the secreted. It localises to the apical cell membrane. It carries out the reaction Broad proteolytic activity. With small-molecule substrates and inhibitors, the major determinant of specificity is P2, which is preferably Leu, Met &gt; Phe, and not Arg.. Its function is as follows. Thiol protease involved in osteoclastic bone resorption and may participate partially in the disorder of bone remodeling. Displays potent endoprotease activity against fibrinogen at acid pH. May play an important role in extracellular matrix degradation. Involved in the release of thyroid hormone thyroxine (T4) by limited proteolysis of TG/thyroglobulin in the thyroid follicle lumen. This Canis lupus familiaris (Dog) protein is Cathepsin K (CTSK).